Here is a 351-residue protein sequence, read N- to C-terminus: Photosystem II D2 protein (351 aa).

Residues 39 to 59 form a helical membrane-spanning segment; it reads CSYLALGAWFTGTTFVTSWYT. Residue H116 participates in chlorophyll a binding. Residues 123 to 139 traverse the membrane as a helical segment; that stretch reads GFCLRQFEIARLVGIRP. Residues Q128 and N141 each coordinate pheophytin a. Residues 151–164 traverse the membrane as a helical segment; it reads VFVSVFLIYPLGQA. H196 is a binding site for chlorophyll a. Residues 206-226 form a helical membrane-spanning segment; it reads GALLCAIHGATVENTLFEDGE. A plastoquinone is bound by residues H213 and F260. H213 serves as a coordination point for Fe cation. H267 contributes to the Fe cation binding site. The chain crosses the membrane as a helical span at residues 277-293; that stretch reads GLWTSSIGIIGLALNLR.

Belongs to the reaction center PufL/M/PsbA/D family. PSII is composed of 1 copy each of membrane proteins PsbA, PsbB, PsbC, PsbD, PsbE, PsbF, PsbH, PsbI, PsbJ, PsbK, PsbL, PsbM, PsbT, PsbY, PsbZ, Psb30/Ycf12, at least 3 peripheral proteins of the oxygen-evolving complex and a large number of cofactors. It forms dimeric complexes. It depends on The D1/D2 heterodimer binds P680, chlorophylls that are the primary electron donor of PSII, and subsequent electron acceptors. It shares a non-heme iron and each subunit binds pheophytin, quinone, additional chlorophylls, carotenoids and lipids. There is also a Cl(-1) ion associated with D1 and D2, which is required for oxygen evolution. The PSII complex binds additional chlorophylls, carotenoids and specific lipids. as a cofactor.

The protein resides in the plastid. Its subcellular location is the chloroplast thylakoid membrane. The catalysed reaction is 2 a plastoquinone + 4 hnu + 2 H2O = 2 a plastoquinol + O2. Photosystem II (PSII) is a light-driven water:plastoquinone oxidoreductase that uses light energy to abstract electrons from H(2)O, generating O(2) and a proton gradient subsequently used for ATP formation. It consists of a core antenna complex that captures photons, and an electron transfer chain that converts photonic excitation into a charge separation. The D1/D2 (PsbA/PsbD) reaction center heterodimer binds P680, the primary electron donor of PSII as well as several subsequent electron acceptors. D2 is needed for assembly of a stable PSII complex. This Galdieria sulphuraria (Red alga) protein is Photosystem II D2 protein.